The chain runs to 161 residues: Anaerobic nitrite reductase Glb1-1 (161 aa).

The 150-residue stretch at 8–157 (CFTEEQEALV…LVGAIKSEMK (150 aa)) folds into the Globin domain. Residues 41–45 (EIAPS) carry the Homodimerization motif. Heme b-binding residues include serine 51, lysine 65, histidine 69, lysine 99, threonine 103, and histidine 104. The Homodimerization motif lies at 111 to 123 (NEHFEVTKFALLD).

This sequence belongs to the plant globin family. In terms of assembly, homodimer. Heme b serves as cofactor. As to expression, mainly expressed in root nodules, and, to a lower extent, in leaves, roots, stems, flowers and fruits. Accumulates in mature root nodules.

The catalysed reaction is Fe(III)-heme b-[protein] + nitric oxide + H2O = Fe(II)-heme b-[protein] + nitrite + 2 H(+). Functionally, phytoglobin that reduces nitrite to nitric oxide (NO) under anoxic conditions (e.g. during flooding or in waterlogged soil) and upon root nodulation. Required for general plant development and during nodulation, especially for the onset of symbiosis. Monitors nitric oxide (NO) levels during early phase of the nitrogen-fixing symbiosis and buffers oxygen in functioning nodules. May not function as an oxygen storage or transport protein. Has an unusually high affinity for O(2) through a hexacoordinate heme iron because of a very low dissociation constant. The protein is Anaerobic nitrite reductase Glb1-1 of Lotus japonicus (Lotus corniculatus var. japonicus).